Consider the following 191-residue polypeptide: Peptidyl-tRNA hydrolase (191 aa).

Residue tyrosine 16 participates in tRNA binding. Histidine 21 (proton acceptor) is an active-site residue. Residues tyrosine 67, asparagine 69, and asparagine 115 each coordinate tRNA.

Belongs to the PTH family. In terms of assembly, monomer.

The protein resides in the cytoplasm. It catalyses the reaction an N-acyl-L-alpha-aminoacyl-tRNA + H2O = an N-acyl-L-amino acid + a tRNA + H(+). In terms of biological role, hydrolyzes ribosome-free peptidyl-tRNAs (with 1 or more amino acids incorporated), which drop off the ribosome during protein synthesis, or as a result of ribosome stalling. Catalyzes the release of premature peptidyl moieties from peptidyl-tRNA molecules trapped in stalled 50S ribosomal subunits, and thus maintains levels of free tRNAs and 50S ribosomes. The polypeptide is Peptidyl-tRNA hydrolase (Wigglesworthia glossinidia brevipalpis).